The primary structure comprises 259 residues: 3-deoxy-manno-octulosonate cytidylyltransferase 1 (259 aa).

This sequence belongs to the KdsB family.

The protein localises to the cytoplasm. The enzyme catalyses 3-deoxy-alpha-D-manno-oct-2-ulosonate + CTP = CMP-3-deoxy-beta-D-manno-octulosonate + diphosphate. It functions in the pathway nucleotide-sugar biosynthesis; CMP-3-deoxy-D-manno-octulosonate biosynthesis; CMP-3-deoxy-D-manno-octulosonate from 3-deoxy-D-manno-octulosonate and CTP: step 1/1. Its pathway is bacterial outer membrane biogenesis; lipopolysaccharide biosynthesis. In terms of biological role, activates KDO (a required 8-carbon sugar) for incorporation into bacterial lipopolysaccharide in Gram-negative bacteria. The polypeptide is 3-deoxy-manno-octulosonate cytidylyltransferase 1 (Hydrogenovibrio crunogenus (strain DSM 25203 / XCL-2) (Thiomicrospira crunogena)).